Consider the following 73-residue polypeptide: Conotoxin Asp7/Gla(3)-TxVI (73 aa).

The N-terminal stretch at M1–A19 is a signal peptide. Residues V20–Q44 constitute a propeptide that is removed on maturation. Intrachain disulfides connect C48–C62, C55–C66, and C61–C71. Residues P49 and P54 each carry the 4-hydroxyproline modification. E60 carries the 4-carboxyglutamate modification. 6'-bromotryptophan is present on W64.

Expressed by the venom duct.

It is found in the secreted. The chain is Conotoxin Asp7/Gla(3)-TxVI from Conus textile (Cloth-of-gold cone).